Reading from the N-terminus, the 200-residue chain is UPF0637 protein LCK_01372 (200 aa).

Belongs to the UPF0637 family.

The polypeptide is UPF0637 protein LCK_01372 (Leuconostoc citreum (strain KM20)).